The primary structure comprises 510 residues: Rab proteins geranylgeranyltransferase component A 1 (510 aa).

The protein belongs to the Rab GDI family. In terms of assembly, may interact with rab-5, rab-7 and rab-11. Does not interact with rab-3, rab-27 and rab-10. As to expression, expressed in several neurons including head neurons, motor neurons located in the ventral nerve cord, HSN and CAN neurons, and tail neurons, and in muscles such as body-wall, pharyngeal, intestinal and anal sphincter. Also expressed in seam cells, the hypodermis and the intestine.

Its subcellular location is the cytoplasm. Functionally, substrate-binding subunit of the Rab geranylgeranyltransferase (GGTase) complex. Binds unprenylated Rab proteins and presents the substrate peptide to the catalytic component B and remains bound to it after the geranylgeranyl transfer reaction. The component A is thought to be regenerated by transferring its prenylated Rab back to the donor membrane. Plays a role in neurotransmitter release from presynaptic terminals at neuromuscular junctions. Positively regulates the function of rab-27 in synaptic transmission most likely through mediating rab-27 prenylation. This is Rab proteins geranylgeranyltransferase component A 1 from Caenorhabditis elegans.